We begin with the raw amino-acid sequence, 204 residues long: Imidazoleglycerol-phosphate dehydratase (204 aa).

Positions 183 to 204 are disordered; the sequence is DPRMDGITPSTKGTLSESGDSQ. Polar residues predominate over residues 190-204; the sequence is TPSTKGTLSESGDSQ.

The protein belongs to the imidazoleglycerol-phosphate dehydratase family.

It localises to the cytoplasm. The catalysed reaction is D-erythro-1-(imidazol-4-yl)glycerol 3-phosphate = 3-(imidazol-4-yl)-2-oxopropyl phosphate + H2O. It functions in the pathway amino-acid biosynthesis; L-histidine biosynthesis; L-histidine from 5-phospho-alpha-D-ribose 1-diphosphate: step 6/9. The sequence is that of Imidazoleglycerol-phosphate dehydratase from Alcanivorax borkumensis (strain ATCC 700651 / DSM 11573 / NCIMB 13689 / SK2).